We begin with the raw amino-acid sequence, 815 residues long: Chromatin assembly factor 1 subunit FAS1 (815 aa).

Disordered regions lie at residues 1–39 (MDEV…TSEE), 292–330 (NNKE…KKQL), 434–477 (KLST…KKSR), 502–577 (QVVK…EGVQ), and 791–815 (RCLP…NENA). Composition is skewed to basic and acidic residues over residues 10–21 (NENRKTMIEPKK) and 292–328 (NNKE…ELKK). Residues 244 to 336 (EEKLLLKQLE…KKQLQVQKQA (93 aa)) are a coiled coil. 2 stretches are compositionally biased toward acidic residues: residues 516–532 (LDYE…EEAG) and 554–576 (DDED…DEGV). Over residues 806–815 (AAERLENENA) the composition is skewed to basic and acidic residues.

The protein belongs to the CHAF1A family. In terms of assembly, component of the chromatin assembly factor 1 (CAF-1) complex, composed of FAS1, FAS2 and MSI1. Interacts with CYP71. Expressed in the shoot apical meristem, young leaf primordia, root tip and first lateral root primordium at the hypocotyl/root junction.

The protein localises to the nucleus. In terms of biological role, component of the chromatin assembly factor complex (CAF-1) involved in chromatin assembly following DNA replication and DNA repair. Assembles histone octamers onto replicating DNA in vitro. Required for several aspects of development, including seedling growth and leaf hair differentiation. Plays a critical role in the organization of shoot apical meristem (SAM) and root apical meristem (RAM) during postembryonic development by facilitating stable maintenance of gene expression states. Seems not required to maintain transcriptional repression of heterochromatic genes. Involved in heterologous recombination. May repress endocycle. This Arabidopsis thaliana (Mouse-ear cress) protein is Chromatin assembly factor 1 subunit FAS1 (FAS1).